The sequence spans 459 residues: Ribulose bisphosphate carboxylase large chain (459 aa).

Lys-4 is subject to N6,N6,N6-trimethyllysine. Asn-113 and Thr-163 together coordinate substrate. Lys-165 (proton acceptor) is an active-site residue. Lys-167 provides a ligand contact to substrate. Residues Lys-191, Asp-193, and Glu-194 each coordinate Mg(2+). Residue Lys-191 is modified to N6-carboxylysine. The active-site Proton acceptor is His-284. Residues Arg-285, His-317, and Ser-369 each coordinate substrate.

This sequence belongs to the RuBisCO large chain family. Type I subfamily. In terms of assembly, heterohexadecamer of 8 large chains and 8 small chains; disulfide-linked. The disulfide link is formed within the large subunit homodimers. It depends on Mg(2+) as a cofactor. In terms of processing, the disulfide bond which can form in the large chain dimeric partners within the hexadecamer appears to be associated with oxidative stress and protein turnover.

It is found in the plastid. The protein localises to the chloroplast. It catalyses the reaction 2 (2R)-3-phosphoglycerate + 2 H(+) = D-ribulose 1,5-bisphosphate + CO2 + H2O. The enzyme catalyses D-ribulose 1,5-bisphosphate + O2 = 2-phosphoglycolate + (2R)-3-phosphoglycerate + 2 H(+). Its function is as follows. RuBisCO catalyzes two reactions: the carboxylation of D-ribulose 1,5-bisphosphate, the primary event in carbon dioxide fixation, as well as the oxidative fragmentation of the pentose substrate in the photorespiration process. Both reactions occur simultaneously and in competition at the same active site. In Cephalotus follicularis (Albany pitcher plant), this protein is Ribulose bisphosphate carboxylase large chain.